The chain runs to 142 residues: Small ribosomal subunit protein uS12 (142 aa).

Residues 1 to 44 form a disordered region; sequence MTNGKYAARKLKKDRQQRRWSDSEYARRERGLGKKSDPLEGAPQ. The span at 7 to 16 shows a compositional bias: basic residues; sequence AARKLKKDRQ. A compositionally biased stretch (basic and acidic residues) spans 17–38; it reads QRRWSDSEYARRERGLGKKSDP.

This sequence belongs to the universal ribosomal protein uS12 family. Part of the 30S ribosomal subunit.

Its function is as follows. With S4 and S5 plays an important role in translational accuracy. Located at the interface of the 30S and 50S subunits. The chain is Small ribosomal subunit protein uS12 from Halobacterium salinarum (strain ATCC 29341 / DSM 671 / R1).